The primary structure comprises 226 residues: Lipoprotein-releasing system ATP-binding protein LolD (226 aa).

The region spanning 5-226 is the ABC transporter domain; that stretch reads LRCEKISKFY…MADGVLREAS (222 aa). Position 41–48 (41–48) interacts with ATP; sequence GSSGSGKS.

It belongs to the ABC transporter superfamily. Lipoprotein translocase (TC 3.A.1.125) family. In terms of assembly, the complex is composed of two ATP-binding proteins (LolD) and two transmembrane proteins (LolC and LolE).

It localises to the cell inner membrane. Functionally, part of the ABC transporter complex LolCDE involved in the translocation of mature outer membrane-directed lipoproteins, from the inner membrane to the periplasmic chaperone, LolA. Responsible for the formation of the LolA-lipoprotein complex in an ATP-dependent manner. The sequence is that of Lipoprotein-releasing system ATP-binding protein LolD from Haemophilus ducreyi (strain 35000HP / ATCC 700724).